Here is a 281-residue protein sequence, read N- to C-terminus: 3-mercaptopyruvate sulfurtransferase (281 aa).

Rhodanese domains follow at residues 17 to 135 (DDPE…LLEE) and 165 to 278 (HENT…LPVE). Position 179 (R179) interacts with substrate. C238 functions as the Cysteine persulfide intermediate in the catalytic mechanism. Positions 238-244 (CGSGVTA) are substrate specificity.

The protein localises to the cytoplasm. The catalysed reaction is 2-oxo-3-sulfanylpropanoate + [thioredoxin]-dithiol = [thioredoxin]-disulfide + hydrogen sulfide + pyruvate + H(+). Functionally, catalyzes the transfer of sulfur from 3-mercaptopyruvate to a thiol-containing acceptor to form an intramolecular disulfide releasing hydrogen sulfide and pyruvate. This chain is 3-mercaptopyruvate sulfurtransferase (sseA), found in Escherichia coli O157:H7.